The following is a 503-amino-acid chain: MDFSIKGCDWSKGEAKGFLTGKSDCIVLGIFEAQTLSGAALDIDTATKGLISRVVKAGDMDGKRGKTLFLHEVSGIGASRVLLVGLGKQDAFNQKAYNDAVTAAWRALLATKVVQVTFSLAQLPVDERSSDWGVRAAILALRNETYRFTQMKSKPEPASHTLKRVVFSVDPADEKAAKVAVKQAVALANGMDLTRDLGNLPGNVCTPTYLGNTAKKIAKDWGLKAEVLGLKQIQALKMGSFLSVARASVEPPQFIVLHYQGAAAKAAPVVLVGKGITFDTGGISLKPGEGMDEMKYDMCGAGSVLGTIRAVAEMGLKINVVAIVPTCENMPGGNATKPGDIVTSMKGLTIEVLNTDAEGRLILCDALTYAERFKPAAVIDVATLTGACVIALGGHNSGLFSTNDALAGELLDASREANDPAWRMPLDDEYQDQLKSNFADLANIGGRPAGAVTAACFLSRFTESYPWAHLDIAGTAWKGGAAKGATGRPVPLLAQFLIDRAGQ.

Mn(2+) contacts are provided by K274 and D279. K286 is an active-site residue. 3 residues coordinate Mn(2+): D297, D356, and E358. The active site involves R360.

The protein belongs to the peptidase M17 family. The cofactor is Mn(2+).

It is found in the cytoplasm. It catalyses the reaction Release of an N-terminal amino acid, Xaa-|-Yaa-, in which Xaa is preferably Leu, but may be other amino acids including Pro although not Arg or Lys, and Yaa may be Pro. Amino acid amides and methyl esters are also readily hydrolyzed, but rates on arylamides are exceedingly low.. The enzyme catalyses Release of an N-terminal amino acid, preferentially leucine, but not glutamic or aspartic acids.. Presumably involved in the processing and regular turnover of intracellular proteins. Catalyzes the removal of unsubstituted N-terminal amino acids from various peptides. This chain is Probable cytosol aminopeptidase, found in Burkholderia cenocepacia (strain ATCC BAA-245 / DSM 16553 / LMG 16656 / NCTC 13227 / J2315 / CF5610) (Burkholderia cepacia (strain J2315)).